We begin with the raw amino-acid sequence, 583 residues long: Laccase-21 (583 aa).

Residues 1 to 29 (MGIAKIPAVLWLLACAVLTFAVAISPAHG) form the signal peptide. 2 consecutive Plastocyanin-like domains span residues 39–155 (FITE…PKHG) and 165–323 (KEIP…YYTG). N-linked (GlcNAc...) asparagine glycosylation occurs at N85. 4 residues coordinate Cu cation: H89, H91, H134, and H136. N-linked (GlcNAc...) asparagine glycosylation is found at N282, N311, N384, N387, N399, N409, and N446. The 132-residue stretch at 436 to 567 (FPNNPAPVFV…NTVFIVKDGK (132 aa)) folds into the Plastocyanin-like 3 domain. The Cu cation site is built by H484, H487, H489, H546, C547, H548, H552, and M557.

Belongs to the multicopper oxidase family. Cu cation is required as a cofactor.

The protein localises to the secreted. Its subcellular location is the extracellular space. It is found in the apoplast. The catalysed reaction is 4 hydroquinone + O2 = 4 benzosemiquinone + 2 H2O. Functionally, lignin degradation and detoxification of lignin-derived products. The sequence is that of Laccase-21 (LAC21) from Oryza sativa subsp. japonica (Rice).